The chain runs to 428 residues: Tryptophan synthase beta chain (428 aa).

Lys92 carries the N6-(pyridoxal phosphate)lysine modification.

Belongs to the TrpB family. In terms of assembly, tetramer of two alpha and two beta chains. Pyridoxal 5'-phosphate serves as cofactor.

The catalysed reaction is (1S,2R)-1-C-(indol-3-yl)glycerol 3-phosphate + L-serine = D-glyceraldehyde 3-phosphate + L-tryptophan + H2O. Its pathway is amino-acid biosynthesis; L-tryptophan biosynthesis; L-tryptophan from chorismate: step 5/5. Functionally, the beta subunit is responsible for the synthesis of L-tryptophan from indole and L-serine. This chain is Tryptophan synthase beta chain, found in Leptothrix cholodnii (strain ATCC 51168 / LMG 8142 / SP-6) (Leptothrix discophora (strain SP-6)).